A 330-amino-acid polypeptide reads, in one-letter code: 5'-AMP-activated protein kinase subunit gamma-1 (330 aa).

Residues 1 to 13 are compositionally biased toward polar residues; that stretch reads METVTSSDSSSAV. The tract at residues 1-26 is disordered; sequence METVTSSDSSSAVENEHPQDTPESNN. 3 CBS domains span residues 43–103, 125–187, and 198–260; these read PTSS…KSAL, SFKP…PKPE, and IGTY…NLDV. Residues Arg-70, 85-90, Val-130, 151-152, and Lys-170 contribute to the ADP site; these read MLTITD and HR. AMP is bound by residues Arg-70, 85 to 90, Val-130, His-151, 151 to 152, Lys-170, Thr-200, Ala-205, 226 to 227, and 242 to 245; these read MLTITD, HR, SA, and SKFD. Residues Arg-70, 85–90, Val-130, 151–152, Arg-152, and Lys-170 contribute to the ATP site; these read MLTITD and HR. The short motif at 138–159 is the AMPK pseudosubstrate element; the sequence is LFDAVSSLIRNKIHRLPVIDPE. 242 to 245 contacts ADP; sequence SKFD. Residue 242-245 coordinates ATP; it reads SKFD. Ser-261 bears the Phosphoserine; by ULK1 mark. Residue Thr-263 is modified to Phosphothreonine; by ULK1. Arg-269 provides a ligand contact to ADP. Arg-269 contacts AMP. Position 269 (Arg-269) interacts with ATP. A Phosphoserine; by ULK1 modification is found at Ser-270. One can recognise a CBS 4 domain in the interval 272 to 329; the sequence is YFEGVLKCYLHETLETIINRLVEAEVHRLVVVDENDVVKGIVSLSDILQALVLTGGEK. Residues Leu-277 and 298-299 contribute to the ADP site; that span reads HR. Residues Leu-277, His-298, 298 to 299, and 314 to 317 each bind AMP; these read HR and SLSD. ATP contacts are provided by residues Leu-277 and 298–299; that span reads HR.

Belongs to the 5'-AMP-activated protein kinase gamma subunit family. As to quaternary structure, AMPK is a heterotrimer of an alpha catalytic subunit (PRKAA1 or PRKAA2), a beta (PRKAB1 or PRKAB2) and a gamma non-catalytic subunits (PRKAG1, PRKAG2 or PRKAG3). Interacts with FNIP1 and FNIP2. Post-translationally, phosphorylated by ULK1 and ULK2; leading to negatively regulate AMPK activity and suggesting the existence of a regulatory feedback loop between ULK1, ULK2 and AMPK. Glycosylated; O-GlcNAcylated by OGT, promoting the AMP-activated protein kinase (AMPK) activity.

AMP/ATP-binding subunit of AMP-activated protein kinase (AMPK), an energy sensor protein kinase that plays a key role in regulating cellular energy metabolism. In response to reduction of intracellular ATP levels, AMPK activates energy-producing pathways and inhibits energy-consuming processes: inhibits protein, carbohydrate and lipid biosynthesis, as well as cell growth and proliferation. AMPK acts via direct phosphorylation of metabolic enzymes, and by longer-term effects via phosphorylation of transcription regulators. Also acts as a regulator of cellular polarity by remodeling the actin cytoskeleton; probably by indirectly activating myosin. Gamma non-catalytic subunit mediates binding to AMP, ADP and ATP, leading to activate or inhibit AMPK: AMP-binding results in allosteric activation of alpha catalytic subunit (PRKAA1 or PRKAA2) both by inducing phosphorylation and preventing dephosphorylation of catalytic subunits. ADP also stimulates phosphorylation, without stimulating already phosphorylated catalytic subunit. ATP promotes dephosphorylation of catalytic subunit, rendering the AMPK enzyme inactive. This chain is 5'-AMP-activated protein kinase subunit gamma-1 (PRKAG1), found in Sus scrofa (Pig).